The primary structure comprises 366 residues: Probable glucuronokinase 2 (366 aa).

126–136 (PRQTGLSGSSA) is a binding site for ATP. The Proton acceptor role is filled by D179.

Belongs to the GHMP kinase family. Mg(2+) serves as cofactor. It depends on Mn(2+) as a cofactor. The cofactor is Co(2+).

The catalysed reaction is D-glucuronate + ATP = 1-phospho-alpha-D-glucuronate + ADP + H(+). In terms of biological role, sugar-1-kinase with a strict substrate specificity for D-glucuronic acid and ATP. Involved in the biosynthesis of UDP-glucuronic acid (UDP-GlcA), providing nucleotide sugars for cell-wall polymers. May be also involved in a salvage pathway for glucuronic acid. This is Probable glucuronokinase 2 (GLCAK2) from Arabidopsis thaliana (Mouse-ear cress).